The following is a 291-amino-acid chain: Ribosomal protein L11 methyltransferase (291 aa).

The S-adenosyl-L-methionine site is built by T136, G159, D181, and N228.

The protein belongs to the methyltransferase superfamily. PrmA family.

It is found in the cytoplasm. The enzyme catalyses L-lysyl-[protein] + 3 S-adenosyl-L-methionine = N(6),N(6),N(6)-trimethyl-L-lysyl-[protein] + 3 S-adenosyl-L-homocysteine + 3 H(+). Its function is as follows. Methylates ribosomal protein L11. In Sinorhizobium fredii (strain NBRC 101917 / NGR234), this protein is Ribosomal protein L11 methyltransferase.